Here is a 468-residue protein sequence, read N- to C-terminus: MKEYQTITEISGPLVFAEVDEPIGYDEIVEIETPQGETKRGQVLESSEGLVAIQVFEGTSGIDRNASVRFLGETLKMPVTEDLLGRVLDGSGQPIDGGPEIVPDERRDIVGAAINPYSREYPEEFIQTGVSAIDGMNTLVRGQKLPIFSASGLPHNDLALQIARQATVPEDEESGEESEFAVVFGAMGITQEEANEFMEDFERTGALERSVVFTNLADDPAVERTVTPRLALTTAEYLAFDKDYHVLVILTDMTNYCEALREIGAAREEVPGRRGYPGYMYTDLAQLYERAGRIQGRDGSVTQIPILTMPGDDDTHPIPDLTGYITEGQIYIDRDLNSQGIRPPINPLPSLSRLMDDGIGEGLTREDHADVSDQMYAAYAEGEDLRDLVNIVGREALSERDNKYLDFAERFEAEFVNQGFDTDRSIEDTLDIGWDLLSTLPKSELNRIDEELIEDYYEDDAESVEAEA.

Belongs to the ATPase alpha/beta chains family. Has multiple subunits with at least A(3), B(3), C, D, E, F, H, I and proteolipid K(x).

Its subcellular location is the cell membrane. In terms of biological role, component of the A-type ATP synthase that produces ATP from ADP in the presence of a proton gradient across the membrane. The B chain is a regulatory subunit. The protein is A-type ATP synthase subunit B of Haloferax volcanii (strain ATCC 29605 / DSM 3757 / JCM 8879 / NBRC 14742 / NCIMB 2012 / VKM B-1768 / DS2) (Halobacterium volcanii).